Here is a 362-residue protein sequence, read N- to C-terminus: 3-isopropylmalate dehydrogenase (362 aa).

77–88 lines the NAD(+) pocket; the sequence is GPKWGTGAVRPE. Positions 95, 105, 134, and 223 each coordinate substrate. Residues Asp223, Asp248, and Asp252 each coordinate Mg(2+). 287 to 298 provides a ligand contact to NAD(+); sequence GSAPDLPPNKVN.

This sequence belongs to the isocitrate and isopropylmalate dehydrogenases family. Homodimer. It depends on Mg(2+) as a cofactor. Requires Mn(2+) as cofactor.

It localises to the cytoplasm. The enzyme catalyses (2R,3S)-3-isopropylmalate + NAD(+) = 4-methyl-2-oxopentanoate + CO2 + NADH. It participates in amino-acid biosynthesis; L-leucine biosynthesis; L-leucine from 3-methyl-2-oxobutanoate: step 3/4. In terms of biological role, catalyzes the oxidation of 3-carboxy-2-hydroxy-4-methylpentanoate (3-isopropylmalate) to 3-carboxy-4-methyl-2-oxopentanoate. The product decarboxylates to 4-methyl-2 oxopentanoate. This Blastobotrys adeninivorans (Yeast) protein is 3-isopropylmalate dehydrogenase (LEU2).